Reading from the N-terminus, the 252-residue chain is MERVLIVNADDFGLSKGQNYGIVEAYRNGVVTSTTALVNGEAIDHAAQLSRELPALGVGMHFVLTLGKPVSEMPGLTRDGLLGKWIWQMAEEDTLPLDEIAHELACQYQRFIDVFGREPTHLDSHHHVHMFPQIFPIVARFAAQRGIALRIDRQTVLNADDLPSDLRSTQGFSSEFYGEEITEACFLRILDASTHRGEASLEVMCHPAFVDNIIRQSAYCYPRLTELEVLTSASLKAAIAERGYRPGSFLDI.

Mg(2+) is bound by residues H61 and H125.

The protein belongs to the YdjC deacetylase family. ChbG subfamily. In terms of assembly, homodimer. It depends on Mg(2+) as a cofactor.

The protein localises to the cytoplasm. The enzyme catalyses N,N'-diacetylchitobiose + H2O = N-acetyl-beta-D-glucosaminyl-(1-&gt;4)-D-glucosamine + acetate. The catalysed reaction is diacetylchitobiose-6'-phosphate + H2O = N'-monoacetylchitobiose-6'-phosphate + acetate. Its pathway is glycan degradation; chitin degradation. Functionally, involved in the degradation of chitin. ChbG is essential for growth on the acetylated chitooligosaccharides chitobiose and chitotriose but is dispensable for growth on cellobiose and chitosan dimer, the deacetylated form of chitobiose. Deacetylation of chitobiose-6-P and chitotriose-6-P is necessary for both the activation of the chb promoter by the regulatory protein ChbR and the hydrolysis of phosphorylated beta-glucosides by the phospho-beta-glucosidase ChbF. Catalyzes the removal of only one acetyl group from chitobiose-6-P to yield monoacetylchitobiose-6-P, the inducer of ChbR and the substrate of ChbF. This is Chitooligosaccharide deacetylase from Salmonella paratyphi C (strain RKS4594).